The chain runs to 539 residues: Glycerol kinase (539 aa).

T49 provides a ligand contact to ADP. Residues T49, T50, and S51 each contribute to the ATP site. Position 49 (T49) interacts with sn-glycerol 3-phosphate. An ADP-binding site is contributed by R53. Positions 119, 120, 171, and 280 each coordinate sn-glycerol 3-phosphate. R119, E120, Y171, D280, and Q281 together coordinate glycerol. The ADP site is built by T302 and G345. Positions 302, 345, 349, and 446 each coordinate ATP. Positions 446 and 450 each coordinate ADP.

It belongs to the FGGY kinase family.

The enzyme catalyses glycerol + ATP = sn-glycerol 3-phosphate + ADP + H(+). Its pathway is polyol metabolism; glycerol degradation via glycerol kinase pathway; sn-glycerol 3-phosphate from glycerol: step 1/1. Its activity is regulated as follows. Inhibited by fructose 1,6-bisphosphate (FBP). Key enzyme in the regulation of glycerol uptake and metabolism. Catalyzes the phosphorylation of glycerol to yield sn-glycerol 3-phosphate. This is Glycerol kinase from Rhodopirellula baltica (strain DSM 10527 / NCIMB 13988 / SH1).